The following is a 379-amino-acid chain: MASSSTSSEEERSLRECERYVQKHNIQQLLKDCIVQLCTARPERPMAYLRDYFEKLELEEAKQMVSQQKSSSRSDSREDEVSPPMNPVVKGRRRRGAISAEVYTEEDATSYVRKVIPKDYKTMAALAKAIEKNVLFAHLDDNERSDIFDAMFSVTYIAGETVIQQGDEGDNFYVIDQGEMDVYVNNEWVTSIGEGGSFGELALIYGTPRAATVRAKTNVKLWGIDRDSYRRILMGSTLRKRKMYEEFLSKVSILESLDKWERLTVADALETVQFEDGQKIVVQGQPGDEFFIILEGSAAVLQRRSENEEFVEVGRLAPSDYFGEIALLMNRPRAATVVARGPLKCVKLDRPRFERVLGPCSDILKRNIQQYNSFVSLSV.

Methionine 1 carries the post-translational modification N-acetylmethionine. The segment at 1-134 (MASSSTSSEE…ALAKAIEKNV (134 aa)) is dimerization and phosphorylation. Residues 63 to 93 (QMVSQQKSSSRSDSREDEVSPPMNPVVKGRR) form a disordered region. Positions 94–98 (RRGAI) match the Pseudophosphorylation motif motif. Residues 135-252 (LFAH…SKVS), glutamate 200, arginine 209, 253-379 (ILES…SLSV), glutamate 324, and arginine 333 contribute to the 3',5'-cyclic AMP site.

Belongs to the cAMP-dependent kinase regulatory chain family. In terms of assembly, the inactive holoenzyme is composed of two regulatory chains and two catalytic chains. Activation by cAMP releases the two active catalytic monomers and the regulatory dimer. Interacts with PRKACA and PRKACB. Interacts with PRRC1; resulting in PKA activation. The pseudophosphorylation site binds to the substrate-binding region of the catalytic chain, resulting in the inhibition of its activity.

It is found in the cell membrane. Its function is as follows. Regulatory subunit of the cAMP-dependent protein kinases involved in cAMP signaling in cells. The chain is cAMP-dependent protein kinase type I-alpha regulatory subunit (prkar1aa) from Danio rerio (Zebrafish).